The primary structure comprises 150 residues: Large ribosomal subunit protein uL13 (150 aa).

It belongs to the universal ribosomal protein uL13 family. Part of the 50S ribosomal subunit.

Its function is as follows. This protein is one of the early assembly proteins of the 50S ribosomal subunit, although it is not seen to bind rRNA by itself. It is important during the early stages of 50S assembly. The chain is Large ribosomal subunit protein uL13 from Chlamydia muridarum (strain MoPn / Nigg).